Consider the following 214-residue polypeptide: Orotate phosphoribosyltransferase (214 aa).

K26 lines the 5-phospho-alpha-D-ribose 1-diphosphate pocket. Position 34–35 (34–35) interacts with orotate; that stretch reads FF. Residues 72–73, R99, K100, K103, H105, and 124–132 contribute to the 5-phospho-alpha-D-ribose 1-diphosphate site; these read YK and DDVITAGTA. Orotate is bound by residues T128 and R156.

Belongs to the purine/pyrimidine phosphoribosyltransferase family. PyrE subfamily. In terms of assembly, homodimer. The cofactor is Mg(2+).

The enzyme catalyses orotidine 5'-phosphate + diphosphate = orotate + 5-phospho-alpha-D-ribose 1-diphosphate. It participates in pyrimidine metabolism; UMP biosynthesis via de novo pathway; UMP from orotate: step 1/2. Functionally, catalyzes the transfer of a ribosyl phosphate group from 5-phosphoribose 1-diphosphate to orotate, leading to the formation of orotidine monophosphate (OMP). The sequence is that of Orotate phosphoribosyltransferase from Pasteurella multocida (strain Pm70).